The sequence spans 682 residues: DNA-directed RNA polymerase subunit beta' (682 aa).

Zn(2+) is bound by residues Cys-69, Cys-71, Cys-87, and Cys-90. The Mg(2+) site is built by Asp-489, Asp-491, and Asp-493.

This sequence belongs to the RNA polymerase beta' chain family. RpoC1 subfamily. In terms of assembly, in plastids the minimal PEP RNA polymerase catalytic core is composed of four subunits: alpha, beta, beta', and beta''. When a (nuclear-encoded) sigma factor is associated with the core the holoenzyme is formed, which can initiate transcription. Mg(2+) is required as a cofactor. The cofactor is Zn(2+).

The protein localises to the plastid. It is found in the chloroplast. It carries out the reaction RNA(n) + a ribonucleoside 5'-triphosphate = RNA(n+1) + diphosphate. In terms of biological role, DNA-dependent RNA polymerase catalyzes the transcription of DNA into RNA using the four ribonucleoside triphosphates as substrates. The protein is DNA-directed RNA polymerase subunit beta' of Vitis vinifera (Grape).